Consider the following 97-residue polypeptide: Na(+)/H(+) antiporter subunit F1 (97 aa).

The next 3 helical transmembrane spans lie at 3-23 (HNVI…AMLI), 35-55 (VVAL…FSIL), and 60-80 (YMIV…AVFS).

It belongs to the CPA3 antiporters (TC 2.A.63) subunit F family. In terms of assembly, may form a heterooligomeric complex that consists of seven subunits: mnhA1, mnhB1, mnhC1, mnhD1, mnhE1, mnhF1 and mnhG1.

It is found in the cell membrane. In terms of biological role, mnh complex is a Na(+)/H(+) antiporter involved in Na(+) excretion. The sequence is that of Na(+)/H(+) antiporter subunit F1 (mnhF1) from Staphylococcus aureus (strain Mu3 / ATCC 700698).